A 463-amino-acid polypeptide reads, in one-letter code: Retinoic acid receptor RXR-gamma (463 aa).

Residues 1-138 (MYGNYSHFMK…TSPGSLVKHI (138 aa)) are modulating. The disordered stretch occupies residues 17–53 (GSPGHSGSTSMSPSAALSTGKPMDSHPSYTDTPVSAP). Polar residues predominate over residues 21 to 33 (HSGSTSMSPSAAL). 2 NR C4-type zinc fingers span residues 139 to 159 (CAIC…CEGC) and 175 to 199 (CRDN…YQKC). The nuclear receptor DNA-binding region spans 139–204 (CAICGDRSSG…RYQKCLVMGM (66 aa)). The tract at residues 205–230 (KREAVQEERQRSRERAESEAECASSG) is hinge. Residues 211–222 (EERQRSRERAES) show a composition bias toward basic and acidic residues. A disordered region spans residues 211–232 (EERQRSRERAESEAECASSGHE). The region spanning 231-459 (HEDMPVERIL…TFLMEMLETP (229 aa)) is the NR LBD domain.

Belongs to the nuclear hormone receptor family. NR2 subfamily. Homodimer. Heterodimer with a RAR molecule. Binds DNA preferentially as a RAR/RXR heterodimer. Interacts with RARA. Acetylated by EP300.

It localises to the nucleus. Its subcellular location is the cytoplasm. Its function is as follows. Receptor for retinoic acid. Retinoic acid receptors bind as heterodimers to their target response elements in response to their ligands, all-trans or 9-cis retinoic acid, and regulate gene expression in various biological processes. The RAR/RXR heterodimers bind to the retinoic acid response elements (RARE) composed of tandem 5'-AGGTCA-3' sites known as DR1-DR5. The high affinity ligand for RXRs is 9-cis retinoic acid. The chain is Retinoic acid receptor RXR-gamma (RXRG) from Sus scrofa (Pig).